We begin with the raw amino-acid sequence, 319 residues long: Cytochrome c biogenesis protein CcsA (319 aa).

Helical transmembrane passes span 9 to 29 (ILTHISFSLVSIGITIFLITL), 44 to 64 (GVIGTFLCITGLLVTRWAYSG), 71 to 91 (LYESLLFLSWSFAIIHMFPYL), 143 to 163 (MVLGYAALLCGSLLSVALLVI), 225 to 245 (IISLGFIFLTIGILSGAVWAN), 259 to 273 (TWAFITWTMFAIYLH), and 286 to 306 (AIVAFLGFIIIWICYFGVNLL).

Belongs to the CcmF/CycK/Ccl1/NrfE/CcsA family. As to quaternary structure, may interact with Ccs1.

The protein resides in the plastid. Its subcellular location is the chloroplast thylakoid membrane. In terms of biological role, required during biogenesis of c-type cytochromes (cytochrome c6 and cytochrome f) at the step of heme attachment. This Oenothera parviflora (Small-flowered evening primrose) protein is Cytochrome c biogenesis protein CcsA.